Consider the following 183-residue polypeptide: MKLQERLGGANIYLVGMMGAGKTTTGRLLAQRLGYSFVDTDAVITAFRQRPIREIFAQEGEPAFRELEQQVLAQVSSYHHLVVATGGGIVLNPMNWSYLHHGIVVWLHVPLAVLCQRLRQDRERPLLQEQPLEERLGELLQARQHLYAQADLELRITLEDTPETVCDRLLETLPCILKPMEPC.

Gly-19–Thr-24 contributes to the ATP binding site. Thr-23 contributes to the Mg(2+) binding site. Positions 41, 65, and 87 each coordinate substrate. Arg-124 is a binding site for ATP. Arg-143 provides a ligand contact to substrate.

This sequence belongs to the shikimate kinase family. In terms of assembly, monomer. Mg(2+) serves as cofactor.

The protein resides in the cytoplasm. It catalyses the reaction shikimate + ATP = 3-phosphoshikimate + ADP + H(+). Its pathway is metabolic intermediate biosynthesis; chorismate biosynthesis; chorismate from D-erythrose 4-phosphate and phosphoenolpyruvate: step 5/7. In terms of biological role, catalyzes the specific phosphorylation of the 3-hydroxyl group of shikimic acid using ATP as a cosubstrate. In Thermosynechococcus vestitus (strain NIES-2133 / IAM M-273 / BP-1), this protein is Shikimate kinase.